Reading from the N-terminus, the 166-residue chain is Cyclin-dependent kinase 4 inhibitor D (166 aa).

M1 is subject to N-acetylmethionine. ANK repeat units lie at residues F41–V69, S73–A102, T106–R135, and S138–P165.

This sequence belongs to the CDKN2 cyclin-dependent kinase inhibitor family. As to quaternary structure, interacts with CDK6.

It localises to the nucleus. Its subcellular location is the cytoplasm. Its function is as follows. Interacts strongly with CDK4 and CDK6 and inhibits them. This chain is Cyclin-dependent kinase 4 inhibitor D (Cdkn2d), found in Mus musculus (Mouse).